Consider the following 137-residue polypeptide: Ribosome-binding factor A (137 aa).

Belongs to the RbfA family. As to quaternary structure, monomer. Binds 30S ribosomal subunits, but not 50S ribosomal subunits or 70S ribosomes.

Its subcellular location is the cytoplasm. Functionally, one of several proteins that assist in the late maturation steps of the functional core of the 30S ribosomal subunit. Associates with free 30S ribosomal subunits (but not with 30S subunits that are part of 70S ribosomes or polysomes). Required for efficient processing of 16S rRNA. May interact with the 5'-terminal helix region of 16S rRNA. This chain is Ribosome-binding factor A, found in Allorhizobium ampelinum (strain ATCC BAA-846 / DSM 112012 / S4) (Agrobacterium vitis (strain S4)).